The primary structure comprises 310 residues: Malate dehydrogenase (310 aa).

NAD(+) is bound by residues 7 to 12 (GAGNVG) and aspartate 32. Residues arginine 81 and arginine 87 each contribute to the substrate site. NAD(+)-binding positions include asparagine 94 and 117–119 (VSN). Residues asparagine 119 and arginine 150 each contribute to the substrate site. Histidine 174 serves as the catalytic Proton acceptor.

This sequence belongs to the LDH/MDH superfamily. MDH type 3 family.

The catalysed reaction is (S)-malate + NAD(+) = oxaloacetate + NADH + H(+). In terms of biological role, catalyzes the reversible oxidation of malate to oxaloacetate. This is Malate dehydrogenase from Pelodictyon phaeoclathratiforme (strain DSM 5477 / BU-1).